A 390-amino-acid polypeptide reads, in one-letter code: uncharacterized protein (390 aa).

The next 2 membrane-spanning stretches (helical) occupy residues 27–47 and 356–376; these read GGLI…MEWI and FGGF…LASF.

This sequence belongs to the ERGIC family.

The protein localises to the membrane. This is an uncharacterized protein from Schizosaccharomyces pombe (strain 972 / ATCC 24843) (Fission yeast).